The chain runs to 230 residues: 2-C-methyl-D-erythritol 4-phosphate cytidylyltransferase (230 aa).

It belongs to the IspD/TarI cytidylyltransferase family. IspD subfamily.

The enzyme catalyses 2-C-methyl-D-erythritol 4-phosphate + CTP + H(+) = 4-CDP-2-C-methyl-D-erythritol + diphosphate. It functions in the pathway isoprenoid biosynthesis; isopentenyl diphosphate biosynthesis via DXP pathway; isopentenyl diphosphate from 1-deoxy-D-xylulose 5-phosphate: step 2/6. Functionally, catalyzes the formation of 4-diphosphocytidyl-2-C-methyl-D-erythritol from CTP and 2-C-methyl-D-erythritol 4-phosphate (MEP). The protein is 2-C-methyl-D-erythritol 4-phosphate cytidylyltransferase of Shewanella halifaxensis (strain HAW-EB4).